Consider the following 311-residue polypeptide: Bifunctional pinoresinol-lariciresinol reductase (311 aa).

Residues 10–16 (GGTGYLG), arginine 35, and lysine 44 contribute to the NADP(+) site. The active-site Proton acceptor is the lysine 138. Arginine 142 contributes to the NADP(+) binding site. Histidine 270 is a binding site for substrate.

It belongs to the NmrA-type oxidoreductase family. Isoflavone reductase subfamily. In terms of assembly, dimer. Expressed in rhizomes, stems, and leaves.

It catalyses the reaction (-)-secoisolariciresinol + NADP(+) = (+)-lariciresinol + NADPH + H(+). The enzyme catalyses (+)-lariciresinol + NADP(+) = (+)-pinoresinol + NADPH + H(+). It participates in aromatic compound metabolism; phenylpropanoid biosynthesis. Functionally, reductase involved in lignan biosynthesis. Also involved in the biosynthesis of etoposide, a chemotherapeutic compound of the topoisomerase inhibitor family. Catalyzes the enantioselective sequential conversion of (+)-pinoresinol into (+)-lariciresinol and of (+)-lariciresinol into (-)-secoisolariciresinol. Abstracts the 4R-hydride from the NADPH cofactor during catalysis. The protein is Bifunctional pinoresinol-lariciresinol reductase of Sinopodophyllum hexandrum (Himalayan may apple).